We begin with the raw amino-acid sequence, 256 residues long: MGGFERRGVRQYNRSEVPRMRWTEEMHRQFVEAVECLGGQDEATPKRILQLMGVKGVSISHIKSHLQMYRSGSSNSNHPVSLQKLTSATVNNISKREFVNSEDRCIYASGDRNTASSDKNTYTILRCGRSSMPSIEEIFRNWEQTRGRLLPWNSNVITTEQATTRASRQTTNYSKPLKQLTDCDLTLSIGQLWDDAAGSDADGSSTISEEVAAPSRDEAFVSSADDHFAAAAAKKESNMLTTDLNLDLTISSSWLS.

Residues 14-74 (RSEVPRMRWT…HLQMYRSGSS (61 aa)) enclose the HTH myb-type domain. Positions 45-70 (PKRILQLMGVKGVSISHIKSHLQMYR) form a DNA-binding region, H-T-H motif.

In terms of tissue distribution, highly expressed in the pulvinus and stem nodes. Expressed in the plumule of germinating seeds, coleoptile, leaves, internodes, leave sheaths, spikes and roots.

The protein resides in the nucleus. Probable transcription factor involved in the regulation of plant height by elongating internode cell length. Involved in the positive regulation of grain yield. May be involved in the regulation of genes related to cell elongation and cell wall synthesis, which are associated with plant height and yield phenotypes. Plays a role in tolerance to cadmium stress. The polypeptide is Myb family transcription factor MPH1 (Oryza sativa subsp. japonica (Rice)).